The chain runs to 813 residues: Microtubule-associated protein 6 (813 aa).

3 S-palmitoyl cysteine lipidation sites follow: C5, C10, and C11. Disordered regions lie at residues 36 to 283 (ATEH…AAAD), 314 to 651 (VKPI…KDES), and 756 to 813 (PLKD…ESSP). Residues 41 to 50 (GAPPQPPPPQ) show a composition bias toward pro residues. Residues 51–62 (QQAQPALAPPSA) are compositionally biased toward low complexity. Gly residues predominate over residues 100–112 (GRSGPGPGLGSGS). S102 carries the post-translational modification Phosphoserine. The tract at residues 118–141 (DSVMRQDYRAWKVQRPEPSCRPRS) is mn 1. The segment covering 121–141 (MRQDYRAWKVQRPEPSCRPRS) has biased composition (basic and acidic residues). The calmodulin-binding stretch occupies residues 126 to 140 (RAWKVQRPEPSCRPR). Y143 carries the phosphotyrosine modification. Basic and acidic residues predominate over residues 149–173 (PFERETQYQKDFRAWPLPRRGDHPW). Residues 153-176 (ETQYQKDFRAWPLPRRGDHPWIPK) are mn 2. The segment at 162 to 176 (AWPLPRRGDHPWIPK) is calmodulin-binding. S187 carries the phosphoserine modification. 4 calmodulin-binding regions span residues 189 to 203 (PILG…SQER), 306 to 320 (RAWT…IKAK), 357 to 371 (RRRI…FKEP), and 384 to 398 (PKKT…RKAK). The tract at residues 298–321 (SSSYRNEFRAWTDIKPVKPIKAKP) is mn 3. The segment covering 367–376 (PFKEPPKVEK) has biased composition (basic and acidic residues). The segment covering 383–398 (KPKKTSASHKPTRKAK) has biased composition (basic residues). Over residues 420-439 (KPDDKEQSKEMNNKLAEAKE) the composition is skewed to basic and acidic residues. Over residues 443 to 454 (QPVSDSSKTQGP) the composition is skewed to polar residues. Over residues 637–651 (KDQDPMVPEHPKDES) the composition is skewed to basic and acidic residues. Phosphoserine is present on S812.

The protein belongs to the STOP family. In terms of assembly, interacts with calmodulin (via C-terminus); the interaction is dependent on Ca(2+). Interacts (via C-terminus) with TMEM106B (via N-terminus). Interacts with ZDHHC17 (via ANK repeats). Interacts with ZDHHC13 (via ANK repeats). Palmitoylated. Probably depalmitoylated by ABHD17A, ABHD17B and ABHD17C. During neuronal polarization, palmitoylation and depalmitoylation cycles regulate MAP6 shuttling between secretory vesicles and microtubules, and its polarized distribution in the axon. Expressed in brain (at protein level). Expressed in spinal cord. Isoform 2 expression is up-regulated in the prefrontal cortex (Brodmann's area 46) of patients with schizophrenia (postmortem brain study).

The protein localises to the cytoplasm. It localises to the cytoskeleton. It is found in the golgi apparatus. Its subcellular location is the cell projection. The protein resides in the axon. The protein localises to the dendrite. It localises to the cytoplasmic vesicle. It is found in the secretory vesicle membrane. Functionally, involved in microtubule stabilization in many cell types, including neuronal cells. Specifically has microtubule cold stabilizing activity. Involved in dendrite morphogenesis and maintenance by regulating lysosomal trafficking via its interaction with TMEM106B. Regulates KIF5A-mediated axonal cargo transport. Regulates axonal growth during neuron polarization. This Homo sapiens (Human) protein is Microtubule-associated protein 6 (MAP6).